The following is a 289-amino-acid chain: Oxaloacetate decarboxylase (289 aa).

S50 is a binding site for substrate. D88 provides a ligand contact to Mg(2+). R159 and H235 together coordinate substrate.

The protein belongs to the isocitrate lyase/PEP mutase superfamily. Oxaloacetate decarboxylase family. As to quaternary structure, homotetramer; dimer of dimers. Mg(2+) serves as cofactor.

The enzyme catalyses oxaloacetate + H(+) = pyruvate + CO2. In terms of biological role, catalyzes the decarboxylation of oxaloacetate into pyruvate. Seems to play a role in maintaining cellular concentrations of bicarbonate and pyruvate. The polypeptide is Oxaloacetate decarboxylase (Pseudomonas putida (strain ATCC 47054 / DSM 6125 / CFBP 8728 / NCIMB 11950 / KT2440)).